Consider the following 740-residue polypeptide: Elongation factor 2 (740 aa).

Residues 23–264 (AQIRNAGTLA…MIIEHVPPPN (242 aa)) form the tr-type G domain. GTP-binding positions include 32–39 (AHVDHGKT), 98–102 (DTPGH), and 152–155 (NKID). Position 605 is a diphthamide (His605).

The protein belongs to the TRAFAC class translation factor GTPase superfamily. Classic translation factor GTPase family. EF-G/EF-2 subfamily.

It is found in the cytoplasm. Its function is as follows. Catalyzes the GTP-dependent ribosomal translocation step during translation elongation. During this step, the ribosome changes from the pre-translocational (PRE) to the post-translocational (POST) state as the newly formed A-site-bound peptidyl-tRNA and P-site-bound deacylated tRNA move to the P and E sites, respectively. Catalyzes the coordinated movement of the two tRNA molecules, the mRNA and conformational changes in the ribosome. The chain is Elongation factor 2 from Pyrobaculum calidifontis (strain DSM 21063 / JCM 11548 / VA1).